We begin with the raw amino-acid sequence, 21 residues long: Bradykinin-potentiating peptide K12 (21 aa).

A disordered region spans residues 1 to 21 (LRDYANRVINGGPVEAAGPPA).

As to expression, expressed by the venom gland.

The protein resides in the secreted. In terms of biological role, inhibits angiotensin-converting enzyme (ACE), but does not serve as substrate for the enzyme. Potentiate bradykinin (BK) on the isolated guinea pig ileum as well as the isolated rat uterus for contraction. Also potentiates in vivo the depressor effect of BK on arterial blood pressure in the normotensive anesthetized rat. Intracerebroventricular injection into mice does not show toxic activity. The chain is Bradykinin-potentiating peptide K12 from Buthus occitanus (Common European scorpion).